Consider the following 499-residue polypeptide: Glycerol kinase (499 aa).

Thr13 contacts ADP. ATP is bound by residues Thr13, Thr14, and Ser15. Thr13 is a binding site for sn-glycerol 3-phosphate. Arg17 contributes to the ADP binding site. Sn-glycerol 3-phosphate contacts are provided by Arg83, Glu84, Tyr135, and Asp245. 5 residues coordinate glycerol: Arg83, Glu84, Tyr135, Asp245, and Gln246. ADP-binding residues include Thr267 and Gly310. Positions 267, 310, 314, and 411 each coordinate ATP. ADP contacts are provided by Gly411 and Asn415.

The protein belongs to the FGGY kinase family. As to quaternary structure, homotetramer and homodimer (in equilibrium).

It carries out the reaction glycerol + ATP = sn-glycerol 3-phosphate + ADP + H(+). The protein operates within polyol metabolism; glycerol degradation via glycerol kinase pathway; sn-glycerol 3-phosphate from glycerol: step 1/1. With respect to regulation, activated by phosphorylation and inhibited by fructose 1,6-bisphosphate (FBP). Key enzyme in the regulation of glycerol uptake and metabolism. Catalyzes the phosphorylation of glycerol to yield sn-glycerol 3-phosphate. The sequence is that of Glycerol kinase from Halothermothrix orenii (strain H 168 / OCM 544 / DSM 9562).